We begin with the raw amino-acid sequence, 25 residues long: Small ribosomal subunit protein uS19 (25 aa).

A disordered region spans residues 1–25; sequence GHKLGEFAPTRTFRGHKKEDKKVKR.

Belongs to the universal ribosomal protein uS19 family.

Its function is as follows. Protein S19 forms a complex with S13 that binds strongly to the 16S ribosomal RNA. In Acholeplasma laidlawii, this protein is Small ribosomal subunit protein uS19 (rpsS).